Consider the following 376-residue polypeptide: MKNIGILGASGSVGTQGLDIIRQYPDTYKLVSFSVGKNLELANKIIEEFRPDICCVQDKEDIDKIQSSSIKVVYGNDGLMEIAAYVKNDMLLNSIMGSIGLKPTVHAIKHGIDIALANKETLVVAGEIIMQLAREYNVNIIPVDSEHSAIFQCLNGEDHKHIEKLIITASGGSFRELSREALKDVTVQDALKHPNWSMGKKITIDSATMMNKGLEVIEARWLFDMPIDKIETLLHKQSIIHSMVEFNDTSVIAQLGTPDMRMPILYAFSYPDRLARKAERLNLAEVGQLDFKAMDFDRYRCLKLAYDAISIGGTMPVVMNAVNEVVVQQFLDGEIGFLDIETIIEREMNAHDVIQSPDLETILEIDAQYKSRKYEV.

8 residues coordinate NADPH: Ser10, Gly11, Ser12, Val13, Gly36, Lys37, Asn38, and Asn118. Lys119 serves as a coordination point for 1-deoxy-D-xylulose 5-phosphate. Glu120 is an NADPH binding site. Mn(2+) is bound at residue Asp144. Residues Ser145, Glu146, Ser170, and His193 each contribute to the 1-deoxy-D-xylulose 5-phosphate site. Residue Glu146 coordinates Mn(2+). An NADPH-binding site is contributed by Gly199. Positions 206, 211, 212, and 215 each coordinate 1-deoxy-D-xylulose 5-phosphate. Mn(2+) is bound at residue Glu215.

This sequence belongs to the DXR family. It depends on Mg(2+) as a cofactor. Mn(2+) is required as a cofactor.

It carries out the reaction 2-C-methyl-D-erythritol 4-phosphate + NADP(+) = 1-deoxy-D-xylulose 5-phosphate + NADPH + H(+). Its pathway is isoprenoid biosynthesis; isopentenyl diphosphate biosynthesis via DXP pathway; isopentenyl diphosphate from 1-deoxy-D-xylulose 5-phosphate: step 1/6. Catalyzes the NADPH-dependent rearrangement and reduction of 1-deoxy-D-xylulose-5-phosphate (DXP) to 2-C-methyl-D-erythritol 4-phosphate (MEP). This is 1-deoxy-D-xylulose 5-phosphate reductoisomerase from Macrococcus caseolyticus (strain JCSC5402) (Macrococcoides caseolyticum).